The primary structure comprises 229 residues: Phosphoglycolate phosphatase (229 aa).

Residue aspartate 13 is the Nucleophile of the active site. The Mg(2+) site is built by aspartate 13, aspartate 15, and aspartate 178.

Belongs to the HAD-like hydrolase superfamily. CbbY/CbbZ/Gph/YieH family. Mg(2+) is required as a cofactor.

It carries out the reaction 2-phosphoglycolate + H2O = glycolate + phosphate. Its pathway is organic acid metabolism; glycolate biosynthesis; glycolate from 2-phosphoglycolate: step 1/1. Its function is as follows. Specifically catalyzes the dephosphorylation of 2-phosphoglycolate. Is involved in the dissimilation of the intracellular 2-phosphoglycolate formed during the DNA repair of 3'-phosphoglycolate ends, a major class of DNA lesions induced by oxidative stress. The sequence is that of Phosphoglycolate phosphatase from Photobacterium profundum (strain SS9).